The sequence spans 248 residues: 2,3-bisphosphoglycerate-dependent phosphoglycerate mutase (248 aa).

Substrate is bound by residues 8–15 (RHGESEWN), 21–22 (TG), Arg60, 87–90 (ERHY), Lys98, 114–115 (RR), and 183–184 (GN). The Tele-phosphohistidine intermediate role is filled by His9. The active-site Proton donor/acceptor is the Glu87.

The protein belongs to the phosphoglycerate mutase family. BPG-dependent PGAM subfamily.

The catalysed reaction is (2R)-2-phosphoglycerate = (2R)-3-phosphoglycerate. Its pathway is carbohydrate degradation; glycolysis; pyruvate from D-glyceraldehyde 3-phosphate: step 3/5. Its function is as follows. Catalyzes the interconversion of 2-phosphoglycerate and 3-phosphoglycerate. This chain is 2,3-bisphosphoglycerate-dependent phosphoglycerate mutase, found in Borrelia hermsii (strain HS1 / DAH).